Consider the following 371-residue polypeptide: Mannonate dehydratase (371 aa).

Belongs to the mannonate dehydratase family. The cofactor is Fe(2+). Requires Mn(2+) as cofactor.

The catalysed reaction is D-mannonate = 2-dehydro-3-deoxy-D-gluconate + H2O. Its pathway is carbohydrate metabolism; pentose and glucuronate interconversion. Catalyzes the dehydration of D-mannonate. The chain is Mannonate dehydratase from Geobacillus thermodenitrificans (strain NG80-2).